The following is a 204-amino-acid chain: Imidazoleglycerol-phosphate dehydratase (204 aa).

A disordered region spans residues 183 to 204 (DPRMDGITPSTKGTLSESGDSQ). Residues 190–204 (TPSTKGTLSESGDSQ) show a composition bias toward polar residues.

Belongs to the imidazoleglycerol-phosphate dehydratase family.

It localises to the cytoplasm. The catalysed reaction is D-erythro-1-(imidazol-4-yl)glycerol 3-phosphate = 3-(imidazol-4-yl)-2-oxopropyl phosphate + H2O. It functions in the pathway amino-acid biosynthesis; L-histidine biosynthesis; L-histidine from 5-phospho-alpha-D-ribose 1-diphosphate: step 6/9. In Alcanivorax borkumensis (strain ATCC 700651 / DSM 11573 / NCIMB 13689 / SK2), this protein is Imidazoleglycerol-phosphate dehydratase.